Consider the following 262-residue polypeptide: MSRIANCFAELAGKKALIPFITAGDPHPGLTVSLMHGLVDGGADIIELGVPFSDPMADGPVIQRASERALKHKVGLRHVLEMVAEFRRDNATTPVVLMGYLNPLCAMGYTEFASRAKAAGVDGVLTVDCPPEEAAELESALDAHGLDTVFLVAPTTPPSRVAEIAKLARGYVYYVSLKGVTGAGHLDIEDVARKIAALRQQLPLPIGVGFGIRDAATAKAIAAAADAVVVGSRLVQEIEAATPETAREQLTRLVAELKAAIR.

Active-site proton acceptor residues include Glu47 and Asp58.

It belongs to the TrpA family. Tetramer of two alpha and two beta chains.

It catalyses the reaction (1S,2R)-1-C-(indol-3-yl)glycerol 3-phosphate + L-serine = D-glyceraldehyde 3-phosphate + L-tryptophan + H2O. It functions in the pathway amino-acid biosynthesis; L-tryptophan biosynthesis; L-tryptophan from chorismate: step 5/5. Its function is as follows. The alpha subunit is responsible for the aldol cleavage of indoleglycerol phosphate to indole and glyceraldehyde 3-phosphate. This chain is Tryptophan synthase alpha chain, found in Chromobacterium violaceum (strain ATCC 12472 / DSM 30191 / JCM 1249 / CCUG 213 / NBRC 12614 / NCIMB 9131 / NCTC 9757 / MK).